Reading from the N-terminus, the 314-residue chain is MDVIKISPRGYCYGVVDAMVIAKNASLDKSLPRPIYILGMIVHNKHVTDAFEEEGIFTLDGSNRLDILKQVDKGTVIFTAHGVSPEVRRIAEEKGLVAIDATCPDVTKTHNLILEMKEKGYHVIYIGKKGHPEPEGAVGVAPEIVHLVETEEDVKNLDIQSEKLIVTNQTTMSQWDVHDIMELVKEKYPHVEYHQEICLATQVRQEAVSEQAKKADLTIVVGDPKSNNSNRLAQVSEEIAGTKAYRIGDLSELKLEWLKGVNTVAVTAGASTPTPITKEVIRFLEQFDHEDPSTWTTEHNIPLKKILPKVKAKN.

[4Fe-4S] cluster is bound at residue C12. (2E)-4-hydroxy-3-methylbut-2-enyl diphosphate contacts are provided by H43 and H81. 2 residues coordinate dimethylallyl diphosphate: H43 and H81. Isopentenyl diphosphate-binding residues include H43 and H81. C103 contributes to the [4Fe-4S] cluster binding site. H131 is a (2E)-4-hydroxy-3-methylbut-2-enyl diphosphate binding site. H131 provides a ligand contact to dimethylallyl diphosphate. H131 contributes to the isopentenyl diphosphate binding site. The active-site Proton donor is the E133. T170 is a (2E)-4-hydroxy-3-methylbut-2-enyl diphosphate binding site. Residue C198 coordinates [4Fe-4S] cluster. (2E)-4-hydroxy-3-methylbut-2-enyl diphosphate contacts are provided by S226, N228, and S271. S226, N228, and S271 together coordinate dimethylallyl diphosphate. Residues S226, N228, and S271 each coordinate isopentenyl diphosphate.

The protein belongs to the IspH family. Requires [4Fe-4S] cluster as cofactor.

It catalyses the reaction isopentenyl diphosphate + 2 oxidized [2Fe-2S]-[ferredoxin] + H2O = (2E)-4-hydroxy-3-methylbut-2-enyl diphosphate + 2 reduced [2Fe-2S]-[ferredoxin] + 2 H(+). It carries out the reaction dimethylallyl diphosphate + 2 oxidized [2Fe-2S]-[ferredoxin] + H2O = (2E)-4-hydroxy-3-methylbut-2-enyl diphosphate + 2 reduced [2Fe-2S]-[ferredoxin] + 2 H(+). The protein operates within isoprenoid biosynthesis; dimethylallyl diphosphate biosynthesis; dimethylallyl diphosphate from (2E)-4-hydroxy-3-methylbutenyl diphosphate: step 1/1. Its pathway is isoprenoid biosynthesis; isopentenyl diphosphate biosynthesis via DXP pathway; isopentenyl diphosphate from 1-deoxy-D-xylulose 5-phosphate: step 6/6. Its function is as follows. Catalyzes the conversion of 1-hydroxy-2-methyl-2-(E)-butenyl 4-diphosphate (HMBPP) into a mixture of isopentenyl diphosphate (IPP) and dimethylallyl diphosphate (DMAPP). Acts in the terminal step of the DOXP/MEP pathway for isoprenoid precursor biosynthesis. This is 4-hydroxy-3-methylbut-2-enyl diphosphate reductase from Bacillus subtilis (strain 168).